The following is a 211-amino-acid chain: NADH-quinone oxidoreductase subunit I (211 aa).

Residues 1–27 (MANTDRPALPHKRAVPPSRADSGPRRR) form a disordered region. 2 4Fe-4S ferredoxin-type domains span residues 71-101 (LNRYPDGLEKCIGCELCAWACPADAIYVEGA) and 117-146 (RVYQINYLRCIGCGLCIEACPTRALTMTYD). [4Fe-4S] cluster contacts are provided by Cys81, Cys84, Cys87, Cys91, Cys126, Cys129, Cys132, and Cys136.

This sequence belongs to the complex I 23 kDa subunit family. NDH-1 is composed of 14 different subunits. Subunits NuoA, H, J, K, L, M, N constitute the membrane sector of the complex. Requires [4Fe-4S] cluster as cofactor.

It is found in the cell membrane. The catalysed reaction is a quinone + NADH + 5 H(+)(in) = a quinol + NAD(+) + 4 H(+)(out). In terms of biological role, NDH-1 shuttles electrons from NADH, via FMN and iron-sulfur (Fe-S) centers, to quinones in the respiratory chain. The immediate electron acceptor for the enzyme in this species is believed to be menaquinone. Couples the redox reaction to proton translocation (for every two electrons transferred, four hydrogen ions are translocated across the cytoplasmic membrane), and thus conserves the redox energy in a proton gradient. This chain is NADH-quinone oxidoreductase subunit I, found in Mycobacterium bovis (strain ATCC BAA-935 / AF2122/97).